We begin with the raw amino-acid sequence, 190 residues long: Dynein axonemal light chain 1 (190 aa).

At Ala-2 the chain carries N-acetylalanine. LRR repeat units lie at residues Asn-49–Lys-70, Asn-71–Gly-92, Thr-94–Lys-115, and Lys-116–Ala-137. Ser-56 carries the post-translational modification Phosphoserine. The LRRCT domain maps to Asn-150–Asn-190.

This sequence belongs to the dynein light chain LC1-type family. Interacts with ZMYND10 (via C-terminus). Interacts with DNAH5, a outer arm dynein heavy chain. Interacts with tubulin located within the A-tubule of the outer doublets in a ATP-independent manner. As to expression, expressed in tissues carrying motile cilia such as respiratory epithelia, ependyma and testis.

Its subcellular location is the cytoplasm. The protein resides in the cytoskeleton. It localises to the cilium axoneme. In terms of biological role, part of the multisubunit axonemal ATPase complexes that generate the force for cilia motility and govern beat frequency. Component of the outer arm dynein (ODA). May be involved in a mechanosensory feedback mechanism controlling ODA activity based on external conformational cues by tethering the outer arm dynein heavy chain (DNAH5) to the microtubule within the axoneme. Important for ciliary function in the airways and for the function of the cilia that produce the nodal flow essential for the determination of the left-right asymmetry. The sequence is that of Dynein axonemal light chain 1 from Homo sapiens (Human).